The sequence spans 271 residues: 2-dehydro-3-deoxyphosphooctonate aldolase (271 aa).

The protein belongs to the KdsA family.

The protein localises to the cytoplasm. It carries out the reaction D-arabinose 5-phosphate + phosphoenolpyruvate + H2O = 3-deoxy-alpha-D-manno-2-octulosonate-8-phosphate + phosphate. The protein operates within carbohydrate biosynthesis; 3-deoxy-D-manno-octulosonate biosynthesis; 3-deoxy-D-manno-octulosonate from D-ribulose 5-phosphate: step 2/3. It participates in bacterial outer membrane biogenesis; lipopolysaccharide biosynthesis. In Campylobacter jejuni subsp. jejuni serotype O:23/36 (strain 81-176), this protein is 2-dehydro-3-deoxyphosphooctonate aldolase.